Reading from the N-terminus, the 205-residue chain is Thymidylate kinase (205 aa).

10 to 17 is a binding site for ATP; the sequence is GIDGAGKS.

Belongs to the thymidylate kinase family.

It catalyses the reaction dTMP + ATP = dTDP + ADP. Functionally, phosphorylation of dTMP to form dTDP in both de novo and salvage pathways of dTTP synthesis. The polypeptide is Thymidylate kinase (Ralstonia nicotianae (strain ATCC BAA-1114 / GMI1000) (Ralstonia solanacearum)).